A 415-amino-acid polypeptide reads, in one-letter code: Lipoyl synthase, mitochondrial (415 aa).

The transit peptide at 1–32 (MAASTNRLRFLYSSARTVPQTGSITPISRRTY) directs the protein to the mitochondrion. Residues 20 to 32 (QTGSITPISRRTY) are compositionally biased toward polar residues. Residues 20–53 (QTGSITPISRRTYATTEPSPSATGAPATARKRTN) are disordered. Positions 33 to 47 (ATTEPSPSATGAPAT) are enriched in low complexity. The [4Fe-4S] cluster site is built by C132, C137, C143, C163, C167, C170, and S378. A Radical SAM core domain is found at 146–367 (GSDKSAATAT…RQRALDMGFL (222 aa)). The segment at 395 to 415 (AAGTAGESVTDSKAAVDEATR) is disordered.

Belongs to the radical SAM superfamily. Lipoyl synthase family. The cofactor is [4Fe-4S] cluster.

The protein localises to the mitochondrion. It carries out the reaction [[Fe-S] cluster scaffold protein carrying a second [4Fe-4S](2+) cluster] + N(6)-octanoyl-L-lysyl-[protein] + 2 oxidized [2Fe-2S]-[ferredoxin] + 2 S-adenosyl-L-methionine + 4 H(+) = [[Fe-S] cluster scaffold protein] + N(6)-[(R)-dihydrolipoyl]-L-lysyl-[protein] + 4 Fe(3+) + 2 hydrogen sulfide + 2 5'-deoxyadenosine + 2 L-methionine + 2 reduced [2Fe-2S]-[ferredoxin]. The protein operates within protein modification; protein lipoylation via endogenous pathway; protein N(6)-(lipoyl)lysine from octanoyl-[acyl-carrier-protein]: step 2/2. In terms of biological role, catalyzes the radical-mediated insertion of two sulfur atoms into the C-6 and C-8 positions of the octanoyl moiety bound to the lipoyl domains of lipoate-dependent enzymes, thereby converting the octanoylated domains into lipoylated derivatives. The protein is Lipoyl synthase, mitochondrial of Aspergillus flavus (strain ATCC 200026 / FGSC A1120 / IAM 13836 / NRRL 3357 / JCM 12722 / SRRC 167).